The chain runs to 69 residues: Large ribosomal subunit protein bL31 (69 aa).

4 residues coordinate Zn(2+): Cys17, Cys19, Cys37, and Cys40.

Belongs to the bacterial ribosomal protein bL31 family. Type A subfamily. In terms of assembly, part of the 50S ribosomal subunit. Zn(2+) serves as cofactor.

Its function is as follows. Binds the 23S rRNA. The polypeptide is Large ribosomal subunit protein bL31 (Clostridium botulinum (strain Eklund 17B / Type B)).